A 72-amino-acid polypeptide reads, in one-letter code: DNA gyrase inhibitor YacG (72 aa).

Residues Cys14, Cys17, Cys33, and Cys37 each coordinate Zn(2+).

Belongs to the DNA gyrase inhibitor YacG family. Interacts with GyrB. It depends on Zn(2+) as a cofactor.

Its function is as follows. Inhibits all the catalytic activities of DNA gyrase by preventing its interaction with DNA. Acts by binding directly to the C-terminal domain of GyrB, which probably disrupts DNA binding by the gyrase. This is DNA gyrase inhibitor YacG from Mannheimia succiniciproducens (strain KCTC 0769BP / MBEL55E).